The sequence spans 402 residues: Diaminopimelate decarboxylase (402 aa).

Lys45 is modified (N6-(pyridoxal phosphate)lysine). Pyridoxal 5'-phosphate contacts are provided by residues Gly224 and 259-262; that span reads EPGR. Substrate contacts are provided by Arg262, Arg298, and Tyr302. Cys327 serves as the catalytic Proton donor. The substrate site is built by Glu328 and Tyr356. Pyridoxal 5'-phosphate is bound at residue Tyr356.

This sequence belongs to the Orn/Lys/Arg decarboxylase class-II family. LysA subfamily. Homodimer. Pyridoxal 5'-phosphate serves as cofactor.

The enzyme catalyses meso-2,6-diaminopimelate + H(+) = L-lysine + CO2. Its pathway is amino-acid biosynthesis; L-lysine biosynthesis via DAP pathway; L-lysine from DL-2,6-diaminopimelate: step 1/1. Its function is as follows. Specifically catalyzes the decarboxylation of meso-diaminopimelate (meso-DAP) to L-lysine. This is Diaminopimelate decarboxylase from Campylobacter jejuni subsp. jejuni serotype O:2 (strain ATCC 700819 / NCTC 11168).